The following is a 264-amino-acid chain: MKIALGIEYNGSRYFGWQRQQEVASVQACLEAALSKVANEPIGVFCAGRTDAGVHATGQVVHFVTSAVRKDAAWTMGVNSHLPADIAVRWVKTVDNDFHARFSATARRYRYIIFSHRYRPAILAQGVTHCYMPLDAEKMERAAQCLLGENDFTSFRAVQCQSRTPWRNVKHVKVTRHGAYIVVDIKANAFVHHMVRNIVGSLIEIGCGNQDVTWMAELLALKDRTRAAATAKADGLYLVSVDYPDHFALPKVPMGPLFLADDEG.

The active-site Nucleophile is Asp-51. Substrate is bound at residue Tyr-109.

Belongs to the tRNA pseudouridine synthase TruA family. In terms of assembly, homodimer.

It carries out the reaction uridine(38/39/40) in tRNA = pseudouridine(38/39/40) in tRNA. In terms of biological role, formation of pseudouridine at positions 38, 39 and 40 in the anticodon stem and loop of transfer RNAs. This chain is tRNA pseudouridine synthase A, found in Yersinia pseudotuberculosis serotype O:1b (strain IP 31758).